Consider the following 459-residue polypeptide: Bifunctional protein GlmU (459 aa).

The tract at residues 1 to 229 is pyrophosphorylase; that stretch reads MSNFAIXLAA…FDESLGVNDR (229 aa). UDP-N-acetyl-alpha-D-glucosamine contacts are provided by residues 8 to 11, lysine 22, glutamine 72, and 77 to 78; these read LAAG and GT. A Mg(2+)-binding site is contributed by aspartate 102. Positions 139, 154, 169, and 227 each coordinate UDP-N-acetyl-alpha-D-glucosamine. Asparagine 227 provides a ligand contact to Mg(2+). Positions 230–250 are linker; that stretch reads VALATAESVMRRRINHKHMVN. The segment at 251 to 459 is N-acetyltransferase; the sequence is GVSFVNPEAT…TRLPHHPKNQ (209 aa). UDP-N-acetyl-alpha-D-glucosamine is bound by residues arginine 332 and lysine 350. The active-site Proton acceptor is the histidine 362. 2 residues coordinate UDP-N-acetyl-alpha-D-glucosamine: tyrosine 365 and asparagine 376. Acetyl-CoA is bound by residues alanine 379, 385-386, serine 404, alanine 422, and arginine 439; that span reads NY.

It in the N-terminal section; belongs to the N-acetylglucosamine-1-phosphate uridyltransferase family. In the C-terminal section; belongs to the transferase hexapeptide repeat family. Homotrimer. Mg(2+) is required as a cofactor.

Its subcellular location is the cytoplasm. The enzyme catalyses alpha-D-glucosamine 1-phosphate + acetyl-CoA = N-acetyl-alpha-D-glucosamine 1-phosphate + CoA + H(+). The catalysed reaction is N-acetyl-alpha-D-glucosamine 1-phosphate + UTP + H(+) = UDP-N-acetyl-alpha-D-glucosamine + diphosphate. Its pathway is nucleotide-sugar biosynthesis; UDP-N-acetyl-alpha-D-glucosamine biosynthesis; N-acetyl-alpha-D-glucosamine 1-phosphate from alpha-D-glucosamine 6-phosphate (route II): step 2/2. It functions in the pathway nucleotide-sugar biosynthesis; UDP-N-acetyl-alpha-D-glucosamine biosynthesis; UDP-N-acetyl-alpha-D-glucosamine from N-acetyl-alpha-D-glucosamine 1-phosphate: step 1/1. The protein operates within bacterial outer membrane biogenesis; LPS lipid A biosynthesis. In terms of biological role, catalyzes the last two sequential reactions in the de novo biosynthetic pathway for UDP-N-acetylglucosamine (UDP-GlcNAc). The C-terminal domain catalyzes the transfer of acetyl group from acetyl coenzyme A to glucosamine-1-phosphate (GlcN-1-P) to produce N-acetylglucosamine-1-phosphate (GlcNAc-1-P), which is converted into UDP-GlcNAc by the transfer of uridine 5-monophosphate (from uridine 5-triphosphate), a reaction catalyzed by the N-terminal domain. This chain is Bifunctional protein GlmU, found in Streptococcus pneumoniae serotype 19F (strain G54).